The primary structure comprises 1809 residues: Putative 1-phosphatidylinositol 3-phosphate 5-kinase (1809 aa).

Over residues Met1–His12 the composition is skewed to low complexity. Disordered regions lie at residues Met1–Lys20 and Thr84–Ala146. The segment covering Thr84–Ala127 has biased composition (polar residues). The segment at Asp186–Leu246 adopts an FYVE-type zinc-finger fold. 8 residues coordinate Zn(2+): Cys192, Cys195, Cys208, Cys211, Cys216, Cys219, Cys238, and Cys241. 2 disordered regions span residues Gln274–Gln300 and Lys399–Asn444. The 77-residue stretch at Gln323–Lys399 folds into the DEP domain. Positions Lys399–Ser410 are enriched in low complexity. Residues Ala431 to Asn444 show a composition bias toward basic and acidic residues. Ser755 is subject to Phosphoserine. Thr760 carries the post-translational modification Phosphothreonine. Residues Leu856–Asn874 are compositionally biased toward basic and acidic residues. Disordered regions lie at residues Leu856–Glu876, Arg1269–Ser1307, Ala1399–Pro1465, and Leu1521–Glu1554. Residues Gln1272–Pro1287 are compositionally biased toward polar residues. Low complexity predominate over residues Ser1426–Ser1452. Basic and acidic residues predominate over residues Ser1454 to Lys1463. Residues Ala1473–Phe1796 form the PIPK domain. Ser1530 is subject to Phosphoserine. The interval Asn1552–Val1809 is catalytic.

It depends on Zn(2+) as a cofactor.

It localises to the endosome membrane. The enzyme catalyses a 1,2-diacyl-sn-glycero-3-phospho-(1D-myo-inositol-3-phosphate) + ATP = a 1,2-diacyl-sn-glycero-3-phospho-(1D-myo-inositol-3,5-bisphosphate) + ADP + H(+). Functionally, regulates both the synthesis and turnover of phosphatidylinositol 3,5-bisphosphate (1,2-diacyl-sn-glycero-3-phospho-(1D-myo-inositol-3,5-bisphosphate) or PtdIns(3,5)P2). Catalyzes the phosphorylation of phosphatidylinositol 3-phosphate (1,2-diacyl-sn-glycero-3-phospho-(1D-myo-inositol-3-phosphate)) on the fifth hydroxyl of the myo-inositol ring, to form PtdIns(3,5)P2. Required for endocytic-vacuolar pathway and nuclear migration. Has a role at a late stage in endosome-related membrane trafficking, at a point when signal termination has occurred. Is not required for receptor silencing. The sequence is that of Putative 1-phosphatidylinositol 3-phosphate 5-kinase (fab1) from Drosophila melanogaster (Fruit fly).